The following is a 1783-amino-acid chain: Collagen alpha-1(XXVII) chain A (1783 aa).

The first 35 residues, 1 to 35 (MNLATRRRVRRTSRLVAKRALLLCILLYCTSFGFT), serve as a signal peptide directing secretion. The Laminin G-like domain maps to 73-235 (TTRARVTTPT…NICSAIRRQC (163 aa)). 5 disordered regions span residues 288–312 (SSSV…LALM), 327–524 (HKPS…PRTP), 553–744 (VGAP…APGP), 772–1461 (PGNM…GDIG), and 1512–1546 (GNPG…LPGP). Low complexity predominate over residues 403 to 415 (KPTSVPKPNPTKN). The segment covering 436–447 (LPAPKPTVPKRP) has biased composition (pro residues). The span at 462 to 494 (HTTPLTPKSTLAPNSTSKKPLPTLKSTSFTTAA) shows a compositional bias: polar residues. A triple-helical region region spans residues 553 to 1547 (VGAPGLKGDQ…RGPPGLPGPP (995 aa)). The Collagen-like 1 domain maps to 554 to 608 (GAPGLKGDQGESGLPGPPGKPGQPGMRGPRGPPGPHGKPGRPGPTGLKGKKGDPG). 5 stretches are compositionally biased toward low complexity: residues 622–633 (VGLPGPVGLVGV), 651–661 (EPGEQGPVGEA), 735–744 (EPGVIGAPGP), 817–829 (PGPQ…IGPS), and 861–870 (ARGLPGPRGA). Collagen-like domains are found at residues 818-873 (GPQG…AAGR) and 845-902 (GKPG…GALG). Gly residues predominate over residues 926–935 (GFIGPGGEAG). Pro residues predominate over residues 967-976 (GGPPGPPGSP). Composition is skewed to low complexity over residues 978–988 (SPGSRGPIGIR) and 1098–1129 (SIGL…AGPD). Positions 986–1043 (GIRGPKGRRGPRGPDGVPGEIGTEGKKGPDGPPGKIGFPGHAGKIGESGEVGPKGFPG) constitute a Collagen-like 4 domain. 3 stretches are compositionally biased toward basic and acidic residues: residues 1131–1158 (TKGE…KDGP), 1170–1182 (PEGK…ERGK), and 1257–1267 (AKGEQGDDGKV). Residues 1269 to 1326 (GPTGAPGLRGPVGKRGDRGEPGDPGYVGQQGVDGLRGKPGAPGLPGDPGPRGTQGPKG) form the Collagen-like 5 domain. 2 stretches are compositionally biased toward low complexity: residues 1334 to 1349 (KGKQ…RGSP) and 1396 to 1409 (LPGK…VGVI). 2 consecutive Collagen-like domains span residues 1446–1503 (GPQG…GLAG) and 1497–1549 (GRGG…PPGI). The span at 1537–1546 (PRGPPGLPGP) shows a compositional bias: pro residues. The propeptide at 1551 to 1783 (LAMNQDFGLG…HLEVGPVCFL (233 aa)) is C-terminal propeptide. Residues 1589–1783 (PEILRTLDYL…HLEVGPVCFL (195 aa)) enclose the Fibrillar collagen NC1 domain. 3 cysteine pairs are disulfide-bonded: Cys1619/Cys1651, Cys1660/Cys1781, and Cys1696/Cys1734. 4 residues coordinate Ca(2+): Asp1637, Asn1639, Cys1642, and Asp1645. The N-linked (GlcNAc...) asparagine glycan is linked to Asn1698.

Belongs to the fibrillar collagen family. As to expression, expressed dynamically in the notochord from late epiboly, spreading to the anterior notochord by 24 hpf, and then throughout the notochord by 30 hpf. Subsequently, notochordal expression becomes restricted to the distal tip of the tail by 48 hpf and is no longer detectable by 72 hpf. Also expressed throughout the floor plate and hypochord at 24 hpf, and in forming head cartilages and the first forming tooth.

It is found in the secreted. It localises to the extracellular space. Its subcellular location is the extracellular matrix. Functionally, may play a role during the calcification of cartilage and the transition of cartilage to bone. Together with col27a1b, plays a role in development of the notochord and axial skeleton. In Danio rerio (Zebrafish), this protein is Collagen alpha-1(XXVII) chain A.